The sequence spans 156 residues: Small ribosomal subunit protein uS7c (156 aa).

It belongs to the universal ribosomal protein uS7 family. In terms of assembly, part of the 30S ribosomal subunit.

Its subcellular location is the plastid. It is found in the chloroplast. In terms of biological role, one of the primary rRNA binding proteins, it binds directly to 16S rRNA where it nucleates assembly of the head domain of the 30S subunit. This Pyropia yezoensis (Susabi-nori) protein is Small ribosomal subunit protein uS7c (rps7).